The primary structure comprises 573 residues: Proton-coupled zinc antiporter SLC30A9, mitochondrial (573 aa).

Residues 66–108 form a disordered region; it reads NCSTSGSGKDGSPTRPEEPKTTEKAQAAQPAAKGAGSKPQGLT. A compositionally biased stretch (low complexity) spans 90–104; sequence AQAAQPAAKGAGSKP. The next 5 membrane-spanning stretches (helical) occupy residues 244–264, 319–339, 347–367, 397–417, and 429–449; these read VVMVAICINGLNFFFKLLAWV, GVGIFMMGAGLSWYHGIMGLL, LLWAYCILAGSLVSEGATLLV, VVLLEDAAAVLGVVLAAGCMG, and SLGSLGVGTLLGTVSAFLIYT. The short motif at 467–471 is the LXXLL motif element; the sequence is LTEFL.

Belongs to the cation diffusion facilitator (CDF) transporter (TC 2.A.4) family. SLC30A subfamily.

Its subcellular location is the mitochondrion membrane. It localises to the nucleus. It is found in the endoplasmic reticulum. The catalysed reaction is Zn(2+)(in) + 2 H(+)(out) = Zn(2+)(out) + 2 H(+)(in). In terms of biological role, mitochondrial proton-coupled zinc ion antiporter mediating the export of zinc from the mitochondria and involved in zinc homeostasis, zinc mobilization as well as mitochondrial morphology and health. In nucleus, may function as a secondary coactivator for nuclear receptors. The chain is Proton-coupled zinc antiporter SLC30A9, mitochondrial (slc30a9) from Danio rerio (Zebrafish).